A 420-amino-acid chain; its full sequence is Nucleoprotein (420 aa).

Polar residues-rich tracts occupy residues 1-11 (MSDNGPQNQRS) and 21-30 (SDSTDNNQDG). A disordered region spans residues 1–49 (MSDNGPQNQRSAPRITFGGPSDSTDNNQDGGRSGARPKQRRPQGLPNNT). Residues 41-186 (RPQGLPNNTA…RGGSQASSRS (146 aa)) form an RNA-binding region. The 128-residue stretch at 48 to 175 (NTASWFTALT…TLPKGFYAEG (128 aa)) folds into the CoV N NTD domain. RNA contacts are provided by Arg92, Arg107, and Arg149. Disordered stretches follow at residues 168 to 214 (PKGF…ASGS), 233 to 286 (KVSG…QGNF), and 362 to 420 (AFPP…STQA). Ser176 bears the Phosphoserine; by host mark. Composition is skewed to low complexity over residues 179–206 (GSQA…RGNS) and 233–249 (KVSG…VTKK). Positions 247–364 (TKKSAAEASK…KHIDAYKAFP (118 aa)) constitute a CoV N CTD domain. Residues 258–361 (PRQKRTATKS…LLNKHIDAYK (104 aa)) are dimerization. Residues 367 to 378 (EPKKDKKKKTDE) are compositionally biased toward basic and acidic residues. Positions 404–420 (RQLQNSMSGASADSTQA) are enriched in polar residues.

Belongs to the betacoronavirus nucleocapsid protein family. In terms of assembly, homooligomer. Both monomeric and oligomeric forms interact with RNA. Interacts with protein M. Interacts with NSP3; this interaction serves to tether the genome to the newly translated replicase-transcriptase complex at a very early stage of infection. ADP-ribosylated. The ADP-ribosylation is retained in the virion during infection. In terms of processing, phosphorylated on serine and threonine residues.

The protein resides in the virion. It is found in the host endoplasmic reticulum-Golgi intermediate compartment. It localises to the host Golgi apparatus. Its function is as follows. Packages the positive strand viral genome RNA into a helical ribonucleocapsid (RNP) and plays a fundamental role during virion assembly through its interactions with the viral genome and membrane protein M. Plays an important role in enhancing the efficiency of subgenomic viral RNA transcription as well as viral replication. This chain is Nucleoprotein, found in Rhinolophus macrotis (Big-eared horseshoe bat).